The following is a 205-amino-acid chain: uncharacterized protein (205 aa).

Residues 1 to 19 (MKTLCVLSIFLALLGGLCT) form the signal peptide. Positions 40–133 (VSSVASTSTP…PKTSKNNPKT (94 aa)) are enriched in low complexity. Residues 40-135 (VSSVASTSTP…TSKNNPKTQE (96 aa)) form a disordered region. Residues 147 to 167 (GILYLFILLLIIFVIILICFI) form a helical membrane-spanning segment.

The protein resides in the host membrane. This is an uncharacterized protein from Equine herpesvirus 2 (strain 86/87) (EHV-2).